A 193-amino-acid chain; its full sequence is Flagellin B1 (193 aa).

Positions Met-1 to Gly-12 are excised as a propeptide.

It belongs to the archaeal flagellin family. Glycosylated.

It is found in the archaeal flagellum. Functionally, flagellin is the subunit protein which polymerizes to form the filaments of archaeal flagella. The protein is Flagellin B1 (flaB1) of Halobacterium salinarum (strain ATCC 700922 / JCM 11081 / NRC-1) (Halobacterium halobium).